Here is a 334-residue protein sequence, read N- to C-terminus: MRSKELIILADSSPDSVVEKAIKMGLKVAAVDQSVKERLKGYLDPSLIVEVSEWPSEGELTLFKIRGPEDVEILRREANERKFLIESESWKIIPLENIIAEVGGERIYAIADDLEEARSLLGVLEIGVKGVVIPIKDSAQLERALRLSEEVNPLNLREARVTEVKQVGMGDRVCVDTTSILSKGEGMLVGGSASFLFLVHSENIESPFTSPREFRVNAGAVSNYLLAPGGKTLYLSEVRAGSEVLAVSVDGRRRAVSVGRAKVERRPMVLVRASSDGEEGWTVLQLAETIPLVKPDGSTVAVTDLKPGDRVLVYVSERKARHFGTAVDEFIEER.

This sequence belongs to the archaeal-type DHQ synthase family.

The catalysed reaction is 2-amino-2,3,7-trideoxy-D-lyxo-hept-6-ulosonate + NAD(+) + H2O = 3-dehydroquinate + NH4(+) + NADH + H(+). Functionally, catalyzes the oxidative deamination and cyclization of 2-amino-3,7-dideoxy-D-threo-hept-6-ulosonic acid (ADH) to yield 3-dehydroquinate (DHQ), which is fed into the canonical shikimic pathway of aromatic amino acid biosynthesis. This chain is 3-dehydroquinate synthase, found in Korarchaeum cryptofilum (strain OPF8).